A 184-amino-acid polypeptide reads, in one-letter code: Putative NAD(P)H nitroreductase HI_1542 (184 aa).

FMN is bound by residues 10–12 (RKS), Arg-35, and His-39. An NAD(+)-binding site is contributed by 122–127 (AAQAQG). An FMN-binding site is contributed by 132–134 (WIS).

Belongs to the nitroreductase family. Homodimer. FMN is required as a cofactor.

This Haemophilus influenzae (strain ATCC 51907 / DSM 11121 / KW20 / Rd) protein is Putative NAD(P)H nitroreductase HI_1542.